Consider the following 170-residue polypeptide: MKMEMGLVFLTVFMAVMSSTMVSAQSSCTNALISMSPCLNYITGNSTSPNQQCCNQLSRVVQSSPDCLCQVLNGGGSQLGINVNQTQALGLPRACNVQTPPVSRCNTGGGGGGSTSDSPAESPNSSGPGNGSKTVPVGEGDGPPSSDGSSIKFSFPLIAFFSAVSYMAIF.

An N-terminal signal peptide occupies residues 1 to 24; that stretch reads MKMEMGLVFLTVFMAVMSSTMVSA. 4 disulfides stabilise this stretch: Cys28–Cys69, Cys38–Cys53, Cys54–Cys95, and Cys67–Cys105. Asn45, Asn84, Asn124, and Asn130 each carry an N-linked (GlcNAc...) asparagine glycan. The segment at 105–148 is disordered; sequence CNTGGGGGGSTSDSPAESPNSSGPGNGSKTVPVGEGDGPPSSDG. Residue Ser146 is the site of GPI-anchor amidated serine attachment. Residues 147–170 constitute a propeptide, removed in mature form; sequence DGSSIKFSFPLIAFFSAVSYMAIF.

It belongs to the plant LTP family. In terms of tissue distribution, expressed in seedlings, preferentially in the endodermis of hypocotyls and roots, as well as in anthers, sepals and flower tori.

It localises to the cell membrane. Functionally, lipid transfer protein involved in seed and ovule maturation and development, probably by regulating the fatty acids homeostasis during suberin and sporopollenin biosynthesis or deposition. Contributes to pre-invasive defense against some non-host powdery mildew pathogens by preventing the penetration of the epidermal cell wall by the fungal agents (e.g. Blumeria graminis f. sp. hordei (Bgh)). The sequence is that of Non-specific lipid transfer protein GPI-anchored 5 from Arabidopsis thaliana (Mouse-ear cress).